The chain runs to 285 residues: Bifunctional protein FolD (285 aa).

Residues 166–168 (GAS) and Ile-232 contribute to the NADP(+) site.

The protein belongs to the tetrahydrofolate dehydrogenase/cyclohydrolase family. Homodimer.

It carries out the reaction (6R)-5,10-methylene-5,6,7,8-tetrahydrofolate + NADP(+) = (6R)-5,10-methenyltetrahydrofolate + NADPH. The catalysed reaction is (6R)-5,10-methenyltetrahydrofolate + H2O = (6R)-10-formyltetrahydrofolate + H(+). Its pathway is one-carbon metabolism; tetrahydrofolate interconversion. Its function is as follows. Catalyzes the oxidation of 5,10-methylenetetrahydrofolate to 5,10-methenyltetrahydrofolate and then the hydrolysis of 5,10-methenyltetrahydrofolate to 10-formyltetrahydrofolate. This chain is Bifunctional protein FolD, found in Vibrio vulnificus (strain CMCP6).